Here is a 152-residue protein sequence, read N- to C-terminus: UPF0266 membrane protein YobD (152 aa).

A run of 3 helical transmembrane segments spans residues 6–26 (LVLILFIAALLAYALYDQFIM), 45–65 (VDSVIFVGLVAILIYNNVTSH), and 67–87 (AQMTTWLLSALALMGFYIFWI).

It belongs to the UPF0266 family.

The protein localises to the cell inner membrane. The chain is UPF0266 membrane protein YobD from Salmonella enteritidis PT4 (strain P125109).